Reading from the N-terminus, the 461-residue chain is MYGRTRVSAALAASRPGEELVLKGWVRTVRVGKDVTFLAINDGSCMTSLQVVVEPALPNYQDVCRIGTGSAVAVRGILRESPAAGQKYELAAEELEIIGPADDSYPLQKKRHSFEYLRTIAHLRPRTNTFGAVFRVRSSLAQAVHRFFAERGFLYVHTPIITANDCEGAGELFRVTTLDMARPPLAAGEVDYSGDFFAQATGLTVSGQLEGELFAQAFSDIYTFGPTFRAENSNTARHAAEFWMIEPELAFADLMADAALAEDFLKFLCRHVLDNCGEDMAFFNEQIDKGLLERVRAVADSSFAVMEYTEAITHLKKAKVPFAFPVEWGLDLQSEHERYITEKVVGGPVFLVNYPKDIKAFYMRQNDDGKTVAAMDLLVPKVGEIIGGSQREERLDLLLERMAQMGINEDGLWWYLDSRRWGSCPHAGFGLGFERLLMYLTGMENIRDVIPFPRTPRHAEF.

Belongs to the class-II aminoacyl-tRNA synthetase family. Homodimer.

It localises to the cytoplasm. It carries out the reaction tRNA(Asn) + L-asparagine + ATP = L-asparaginyl-tRNA(Asn) + AMP + diphosphate + H(+). In Geotalea uraniireducens (strain Rf4) (Geobacter uraniireducens), this protein is Asparagine--tRNA ligase.